A 482-amino-acid chain; its full sequence is uncharacterized protein (482 aa).

The next 12 helical transmembrane spans lie at 40–57, 83–103, 109–129, 140–160, 170–190, 205–225, 278–298, 311–331, 338–358, 366–386, 399–418, and 428–448; these read LDWY…LSFL, AAVS…VLLV, HYYL…TCFV, LLLG…ISMT, LAYL…IATG, WLYI…LFCL, VIQF…PSIL, YMSV…CLLS, GWFI…LLAT, VATY…ITWI, ALGC…GQVY, and GFAL…RFYL.

Belongs to the major facilitator superfamily. Allantoate permease family.

Its subcellular location is the endoplasmic reticulum. It is found in the membrane. This is an uncharacterized protein from Schizosaccharomyces pombe (strain 972 / ATCC 24843) (Fission yeast).